A 287-amino-acid polypeptide reads, in one-letter code: ATP synthase gamma chain (287 aa).

It belongs to the ATPase gamma chain family. As to quaternary structure, F-type ATPases have 2 components, CF(1) - the catalytic core - and CF(0) - the membrane proton channel. CF(1) has five subunits: alpha(3), beta(3), gamma(1), delta(1), epsilon(1). CF(0) has three main subunits: a, b and c.

It is found in the cell inner membrane. Produces ATP from ADP in the presence of a proton gradient across the membrane. The gamma chain is believed to be important in regulating ATPase activity and the flow of protons through the CF(0) complex. This is ATP synthase gamma chain from Tolumonas auensis (strain DSM 9187 / NBRC 110442 / TA 4).